The following is a 487-amino-acid chain: GTPase Der (487 aa).

EngA-type G domains lie at 3-166 and 193-366; these read PVIA…PRDA and IKIA…QSAV. GTP-binding positions include 9-16, 56-60, 118-121, 199-206, 246-250, and 311-314; these read GRPNVGKS, DTGGI, NKID, DTAGV, and NKWD. The region spanning 367-451 is the KH-like domain; the sequence is TRWPTSRLTQ…PIRIEYKGGE (85 aa). A compositionally biased stretch (basic and acidic residues) spans 448 to 461; sequence KGGENPYEGKKNTL. The segment at 448–487 is disordered; sequence KGGENPYEGKKNTLTDRQVNKKRRLMSHHKKAEKKRRDKR. A compositionally biased stretch (basic residues) spans 467 to 487; the sequence is NKKRRLMSHHKKAEKKRRDKR.

This sequence belongs to the TRAFAC class TrmE-Era-EngA-EngB-Septin-like GTPase superfamily. EngA (Der) GTPase family. In terms of assembly, associates with the 50S ribosomal subunit.

Its function is as follows. GTPase that plays an essential role in the late steps of ribosome biogenesis. This is GTPase Der from Pseudomonas putida (strain ATCC 47054 / DSM 6125 / CFBP 8728 / NCIMB 11950 / KT2440).